A 777-amino-acid chain; its full sequence is Endonuclease MutS2 (777 aa).

328-335 (GPNTGGKT) contributes to the ATP binding site. In terms of domain architecture, Smr spans 702–777 (LDLRGKRYEE…GSGATIVIFK (76 aa)).

The protein belongs to the DNA mismatch repair MutS family. MutS2 subfamily. As to quaternary structure, homodimer. Binds to stalled ribosomes, contacting rRNA.

Its function is as follows. Endonuclease that is involved in the suppression of homologous recombination and thus may have a key role in the control of bacterial genetic diversity. In terms of biological role, acts as a ribosome collision sensor, splitting the ribosome into its 2 subunits. Detects stalled/collided 70S ribosomes which it binds and splits by an ATP-hydrolysis driven conformational change. Acts upstream of the ribosome quality control system (RQC), a ribosome-associated complex that mediates the extraction of incompletely synthesized nascent chains from stalled ribosomes and their subsequent degradation. Probably generates substrates for RQC. In Streptococcus gordonii (strain Challis / ATCC 35105 / BCRC 15272 / CH1 / DL1 / V288), this protein is Endonuclease MutS2.